The primary structure comprises 233 residues: 7-cyano-7-deazaguanine synthase (233 aa).

18–28 (FSGGQDSTTCL) contributes to the ATP binding site. The Zn(2+) site is built by Cys-198, Cys-213, Cys-216, and Cys-219.

The protein belongs to the QueC family. Zn(2+) is required as a cofactor.

It carries out the reaction 7-carboxy-7-deazaguanine + NH4(+) + ATP = 7-cyano-7-deazaguanine + ADP + phosphate + H2O + H(+). It functions in the pathway purine metabolism; 7-cyano-7-deazaguanine biosynthesis. Functionally, catalyzes the ATP-dependent conversion of 7-carboxy-7-deazaguanine (CDG) to 7-cyano-7-deazaguanine (preQ(0)). The polypeptide is 7-cyano-7-deazaguanine synthase (Wolinella succinogenes (strain ATCC 29543 / DSM 1740 / CCUG 13145 / JCM 31913 / LMG 7466 / NCTC 11488 / FDC 602W) (Vibrio succinogenes)).